A 343-amino-acid polypeptide reads, in one-letter code: ATP-dependent 6-phosphofructokinase (343 aa).

Residues G10, 73 to 74 (RV), and 103 to 106 (GEGT) each bind ATP. A Mg(2+)-binding site is contributed by E104. Substrate-binding positions include 126-128 (TID), R163, 170-172 (MGR), E223, R267, and 273-276 (HIQR). D128 functions as the Proton acceptor in the catalytic mechanism.

The protein belongs to the phosphofructokinase type A (PFKA) family. Mixed-substrate PFK group III subfamily. In terms of assembly, homodimer or homotetramer. Mg(2+) is required as a cofactor.

It is found in the cytoplasm. The enzyme catalyses beta-D-fructose 6-phosphate + ATP = beta-D-fructose 1,6-bisphosphate + ADP + H(+). It catalyses the reaction D-tagatofuranose 6-phosphate + ATP = D-tagatofuranose 1,6-bisphosphate + ADP + H(+). The protein operates within carbohydrate degradation; glycolysis; D-glyceraldehyde 3-phosphate and glycerone phosphate from D-glucose: step 3/4. Functionally, catalyzes the phosphorylation of D-fructose 6-phosphate to fructose 1,6-bisphosphate by ATP, the first committing step of glycolysis. Can also catalyze the phosphorylation of tagatose-6-phosphate. In Mycobacterium tuberculosis (strain CDC 1551 / Oshkosh), this protein is ATP-dependent 6-phosphofructokinase.